Consider the following 347-residue polypeptide: UPF0324 membrane protein Atu0671 (347 aa).

Helical transmembrane passes span 15 to 37 (LRWLSPLLPGILICAAVSCAAIL), 50 to 72 (WLGDLVLAILIGTLLRSLVSLPV), 105 to 127 (AGGLLIGGIALIVALSLVFSYAA), 140 to 162 (LIACGNSICGNSAIAAAAPAIGA), 172 to 194 (AFTAVLGVVAVLLMPFLPQLLGL), 201 to 223 (IFAGLTVYAVPQVLAATAPLGAV), 233 to 250 (LIRVLMLGPVIATLSVIH), 263 to 282 (MVPWFIIGFVLMIMARSFGL), 287 to 309 (LLSPVASLSNILTIMSMAALGLS), and 322 to 344 (VIIAASLSLVLLGVLSFGLILLT).

It belongs to the UPF0324 family.

The protein resides in the cell membrane. The sequence is that of UPF0324 membrane protein Atu0671 from Agrobacterium fabrum (strain C58 / ATCC 33970) (Agrobacterium tumefaciens (strain C58)).